A 238-amino-acid chain; its full sequence is Probable transcriptional regulatory protein CHU_3516 (238 aa).

It belongs to the TACO1 family.

It localises to the cytoplasm. The chain is Probable transcriptional regulatory protein CHU_3516 from Cytophaga hutchinsonii (strain ATCC 33406 / DSM 1761 / CIP 103989 / NBRC 15051 / NCIMB 9469 / D465).